The chain runs to 333 residues: Ribosomal RNA large subunit methyltransferase F (333 aa).

Positions 1 to 10 are enriched in basic residues; the sequence is MPQPPKRPRK. The interval 1–31 is disordered; it reads MPQPPKRPRKPAPAAVKTAPAKGELHPRNRH. Residues 12 to 22 are compositionally biased toward low complexity; it reads APAAVKTAPAK.

This sequence belongs to the methyltransferase superfamily. METTL16/RlmF family.

The protein resides in the cytoplasm. The catalysed reaction is adenosine(1618) in 23S rRNA + S-adenosyl-L-methionine = N(6)-methyladenosine(1618) in 23S rRNA + S-adenosyl-L-homocysteine + H(+). Specifically methylates the adenine in position 1618 of 23S rRNA. This Ectopseudomonas mendocina (strain ymp) (Pseudomonas mendocina) protein is Ribosomal RNA large subunit methyltransferase F.